Reading from the N-terminus, the 78-residue chain is uncharacterized protein (78 aa).

The interval 1-28 is disordered; the sequence is MQANHSVSYLYESSTSKRSNGLFSQTQK.

This is an uncharacterized protein from Saccharomyces cerevisiae (strain ATCC 204508 / S288c) (Baker's yeast).